The chain runs to 417 residues: Sterile alpha motif domain-containing protein 14 (417 aa).

A disordered region spans residues L37–H306. The segment covering K40–S49 has biased composition (basic residues). A phosphoserine mark is found at S84 and S108. Low complexity predominate over residues S138–S153. Residues P159–S173 are compositionally biased toward basic and acidic residues. Residues S173 and S179 each carry the phosphoserine modification. Composition is skewed to low complexity over residues S244–S260 and S276–P289. Residue S279 is modified to Phosphoserine. T283 is modified (phosphothreonine). The region spanning W326–A389 is the SAM domain. Residues D375 to K416 are a coiled coil. A disordered region spans residues A390–S417.

The chain is Sterile alpha motif domain-containing protein 14 (Samd14) from Rattus norvegicus (Rat).